The following is a 462-amino-acid chain: BPI fold-containing family B member 2 (462 aa).

The first 22 residues, 1-22 (MARACSLGLLLLLLLLLRTVVT), serve as a signal peptide directing secretion. A Phosphothreonine modification is found at Thr55. Ser63 carries the post-translational modification Phosphoserine. N-linked (GlcNAc...) asparagine glycosylation is present at Asn99. Residues Cys140 and Cys177 are joined by a disulfide bond. Asn297 and Asn336 each carry an N-linked (GlcNAc...) asparagine glycan.

This sequence belongs to the BPI/LBP/Plunc superfamily. BPI/LBP family.

The protein resides in the secreted. The polypeptide is BPI fold-containing family B member 2 (Bpifb2) (Mus musculus (Mouse)).